The primary structure comprises 218 residues: Elongation factor Ts (218 aa).

Positions 82 to 85 (TDFV) are involved in Mg(2+) ion dislocation from EF-Tu.

This sequence belongs to the EF-Ts family.

The protein resides in the cytoplasm. Functionally, associates with the EF-Tu.GDP complex and induces the exchange of GDP to GTP. It remains bound to the aminoacyl-tRNA.EF-Tu.GTP complex up to the GTP hydrolysis stage on the ribosome. This chain is Elongation factor Ts, found in Prochlorococcus marinus (strain AS9601).